Here is a 354-residue protein sequence, read N- to C-terminus: Uroporphyrinogen decarboxylase (354 aa).

Substrate-binding positions include 27–31 (RQAGR), Asp-77, Tyr-154, Thr-209, and His-327.

The protein belongs to the uroporphyrinogen decarboxylase family. As to quaternary structure, homodimer.

It localises to the cytoplasm. The catalysed reaction is uroporphyrinogen III + 4 H(+) = coproporphyrinogen III + 4 CO2. It participates in porphyrin-containing compound metabolism; protoporphyrin-IX biosynthesis; coproporphyrinogen-III from 5-aminolevulinate: step 4/4. Its function is as follows. Catalyzes the decarboxylation of four acetate groups of uroporphyrinogen-III to yield coproporphyrinogen-III. This chain is Uroporphyrinogen decarboxylase, found in Sodalis glossinidius (strain morsitans).